The sequence spans 154 residues: MANIIEGKLNAEGFKFGIIVSRFNSFICDRLVEGALDTLVRHGAADGDIDILRVPGAFEIPVAAQKAAASKRYDALICLGAVIRGSTPHFDYVCAEVSKGVASVSLDSGMPVSFGVITTDSIEQAIERAGTKAGNKGTDAAITAIEMVNLFKVI.

Residues phenylalanine 23, 57-59, and 81-83 each bind 5-amino-6-(D-ribitylamino)uracil; these read AFE and AVI. Residue 86–87 participates in (2S)-2-hydroxy-3-oxobutyl phosphate binding; it reads ST. Residue histidine 89 is the Proton donor of the active site. Position 114 (phenylalanine 114) interacts with 5-amino-6-(D-ribitylamino)uracil. (2S)-2-hydroxy-3-oxobutyl phosphate is bound at residue arginine 128.

It belongs to the DMRL synthase family.

The enzyme catalyses (2S)-2-hydroxy-3-oxobutyl phosphate + 5-amino-6-(D-ribitylamino)uracil = 6,7-dimethyl-8-(1-D-ribityl)lumazine + phosphate + 2 H2O + H(+). It participates in cofactor biosynthesis; riboflavin biosynthesis; riboflavin from 2-hydroxy-3-oxobutyl phosphate and 5-amino-6-(D-ribitylamino)uracil: step 1/2. Functionally, catalyzes the formation of 6,7-dimethyl-8-ribityllumazine by condensation of 5-amino-6-(D-ribitylamino)uracil with 3,4-dihydroxy-2-butanone 4-phosphate. This is the penultimate step in the biosynthesis of riboflavin. The protein is 6,7-dimethyl-8-ribityllumazine synthase of Syntrophotalea carbinolica (strain DSM 2380 / NBRC 103641 / GraBd1) (Pelobacter carbinolicus).